A 292-amino-acid polypeptide reads, in one-letter code: Elongation factor Ts (292 aa).

The interval 82 to 85 is involved in Mg(2+) ion dislocation from EF-Tu; sequence TDFV.

The protein belongs to the EF-Ts family.

Its subcellular location is the cytoplasm. In terms of biological role, associates with the EF-Tu.GDP complex and induces the exchange of GDP to GTP. It remains bound to the aminoacyl-tRNA.EF-Tu.GTP complex up to the GTP hydrolysis stage on the ribosome. The chain is Elongation factor Ts from Bordetella petrii (strain ATCC BAA-461 / DSM 12804 / CCUG 43448).